Here is a 305-residue protein sequence, read N- to C-terminus: MIKQRTLKRIVQATGVGLHTGKKVTLTLRPAPANTGVIYRRTDLNPPVDFPADAKSVRDTMLCTCLVNEHDVRISTVEHLNAALAGLGIDNIVIEVNAPEIPIMDGSAAPFVYLLLDAGIDELNCAKKFVRIKETVRVEDGDKWAEFRPYNGFTLDFTIDFNHPAIDSSSQRYAMNFSADAFMRQISRARTFGFMRDIEYLQSRGLCLGGSFDCAIVVDDYRVLNEDGLRFEDEFVRHKMLDAIGDLFMCGHNIIGAFTAYKSGHALNNKLLQAVLANQEAWEFVTFQDDAELPLAFKAPSTVLA.

Zn(2+) is bound by residues histidine 79, histidine 238, and aspartate 242. Residue histidine 265 is the Proton donor of the active site.

Belongs to the LpxC family. The cofactor is Zn(2+).

The enzyme catalyses a UDP-3-O-[(3R)-3-hydroxyacyl]-N-acetyl-alpha-D-glucosamine + H2O = a UDP-3-O-[(3R)-3-hydroxyacyl]-alpha-D-glucosamine + acetate. Its pathway is glycolipid biosynthesis; lipid IV(A) biosynthesis; lipid IV(A) from (3R)-3-hydroxytetradecanoyl-[acyl-carrier-protein] and UDP-N-acetyl-alpha-D-glucosamine: step 2/6. Its function is as follows. Catalyzes the hydrolysis of UDP-3-O-myristoyl-N-acetylglucosamine to form UDP-3-O-myristoylglucosamine and acetate, the committed step in lipid A biosynthesis. The protein is UDP-3-O-acyl-N-acetylglucosamine deacetylase of Salmonella arizonae (strain ATCC BAA-731 / CDC346-86 / RSK2980).